A 669-amino-acid polypeptide reads, in one-letter code: MGKIKELQTSLANKIAAGEVVERPSSVVKELLENAIDAGATEISIEVEESGVQSIRVVDNGSGIEAEDLGLVFHRHATSKLDQDEDLFHIRTLGFRGEALASISSVAKVTLKTCTDNANGNEIYVENGEILNHKPAKAKKGTDILVESLFYNTPARLKYIKSLYTELGKITDIVNRMAMSHPDIRIALISDGKTMLSTNGSGRTNEVMAEIYGMKVARDLVHISGDTSDYHIEGFVAKPEHSRSNKHYISIFINGRYIKNFMLNKAILEGYHTLLTIGRFPICYINIEMDPILVDVNVHPTKLEVRLSKEEQLYQLIVSKIQEAFKDRILIPKNNLDYVPKKNKVLHSFEQQKIEFEQRQNTENNQEKTFSSEESNSKPFMEENQNDEIVIKEDSYNPFVTKTSESLIADDESSGYNNTREKDEDYFKKQQEILQEMDQTFDSNDGTTVQNYENKASDDYYDVNDIKGTKSKDPKRRIPYMEIVGQVHGTYIIAQNEFGMYMIDQHAAQERIKYEYFRDKIGEVTNEVQDLLIPLTFHFSKDEQLVIDQYKNELQQVGIMLEHFGGHDYIVSSYPVWFPKDEVEEIIKDMIELILEEKKVDIKKLREDVAIMMSCKKSIKANHYLQKHEMSDLIDQLREAEDPFTCPHGRPIIINFSKYELEKLFKRVM.

A disordered region spans residues Phe-356–Glu-382. Residues Asn-361–Lys-378 show a composition bias toward polar residues.

The protein belongs to the DNA mismatch repair MutL/HexB family.

Its function is as follows. This protein is involved in the repair of mismatches in DNA. It is required for dam-dependent methyl-directed DNA mismatch repair. May act as a 'molecular matchmaker', a protein that promotes the formation of a stable complex between two or more DNA-binding proteins in an ATP-dependent manner without itself being part of a final effector complex. The sequence is that of DNA mismatch repair protein MutL from Staphylococcus aureus (strain USA300).